The primary structure comprises 1364 residues: Outer kinetochore KNL1 complex subunit spc7 (1364 aa).

The segment covering 1–15 has biased composition (polar residues); the sequence is MPTSPRRNSIATTDN. Disordered stretches follow at residues 1 to 36, 124 to 190, and 202 to 223; these read MPTSPRRNSIATTDNVIGRNKSRKRPHSLGGPGALQ, YPKD…DIAS, and EALNAGHPPPSLYPENDDLSIQ. Positions 124-136 are enriched in basic and acidic residues; sequence YPKDHQSDSEKST. Over residues 157-169 the composition is skewed to polar residues; it reads GPTTTSFSRNETQ. The span at 170 to 181 shows a compositional bias: low complexity; that stretch reads SSPHSHSASIIS. Positions 254–257 match the MELT; degenerate motif; it reads MDLT. The residue at position 257 (threonine 257) is a Phosphothreonine; by mph1. The disordered stretch occupies residues 289-334; sequence ASHDPSNQTQLSSPNKSSSPTSIEISDFSKNNENHDQSENKEEEED. A compositionally biased stretch (low complexity) spans 300 to 310; it reads SSPNKSSSPTS. A compositionally biased stretch (basic and acidic residues) spans 318-328; sequence KNNENHDQSEN. Positions 450 to 453 match the MELT; degenerate motif; that stretch reads MDLT. Threonine 453 bears the Phosphothreonine; by mph1 mark. The disordered stretch occupies residues 456–503; that stretch reads ISSTNAPTHLNEDDLNQFTSNISSSSKPRKDNNKTANSSKPIPDSEDF. Positions 471 to 481 are enriched in polar residues; it reads NQFTSNISSSS. The short motif at 504–507 is the MELT; degenerate element; it reads MDIT. Threonine 507 carries the post-translational modification Phosphothreonine; by mph1. 2 disordered regions span residues 564–643 and 697–837; these read LPSA…SSFD and GATP…GVSN. Over residues 566–585 the composition is skewed to basic and acidic residues; that stretch reads SADKENAEREEIPSYSDKSE. Residues 586–617 show a composition bias toward polar residues; the sequence is NFNTTSFTNHERSPNGNNNLKFSKDPNSSSPS. Residues 719 to 730 are compositionally biased toward basic and acidic residues; the sequence is EVSRQPTDDKGE. Polar residues predominate over residues 747–773; the sequence is LTIQQTNEIKHVPTNTTSSVKLPQQPS. A compositionally biased stretch (basic and acidic residues) spans 791–802; the sequence is SLERLESQEPNR. The span at 808–820 shows a compositional bias: polar residues; sequence VGSSNAGNTTSVG. The stretch at 1075–1155 forms a coiled coil; that stretch reads LAQAQEKLEK…EEQLLNLKNE (81 aa). The Nuclear localization signal motif lies at 1091-1105; sequence RRRRLLSEKEERRKE.

In terms of assembly, component of the KNL1/SPC105 complex composed of at least spc7 and sos7. Part of the outer kinetochore KMN network that includes the KNL1, MIS12 and NDC80 complexes. Interacts (via C-terminus) with sos7 (via C-terminus); the interaction is direct. Interacts (when phosphorylated on MELT motifs) with bub1 and bub3; to recruit the BUB1-BUB3 complex to the kinetochore. Post-translationally, phosphorylation of threonine residues in the MELT motifs by mph1/mps1 leads to recruitment of bub1 and bub3 to the kinetochore, and is required to maintain spindle assembly checkpoint signaling.

It is found in the nucleus. The protein resides in the chromosome. The protein localises to the centromere. Its subcellular location is the kinetochore. In terms of biological role, acts as a component of the outer kinetochore KNL1 complex that serves as a docking point for spindle assembly checkpoint components and mediates microtubule-kinetochore interactions. Kinetochores, consisting of a centromere-associated inner segment and a microtubule-contacting outer segment, play a crucial role in chromosome segregation by mediating the physical connection between centromeric DNA and spindle microtubules. The outer kinetochore is made up of the ten-subunit KMN network, comprising the MIS12, NDC80 and KNL1 complexes, and auxiliary microtubule-associated components; together they connect the outer kinetochore with the inner kinetochore, bind microtubules, and mediate interactions with mitotic checkpoint proteins that delay anaphase until chromosomes are bioriented on the spindle. Recruits the BUB1-BUB3 complex to kinetochores when phosphorylated by mph1/mps1, to support spindle assembly checkpoint signaling. Functions both in mitotic and in meiotic chromosome segregation. This is Outer kinetochore KNL1 complex subunit spc7 from Schizosaccharomyces pombe (strain 972 / ATCC 24843) (Fission yeast).